The primary structure comprises 444 residues: Amino-acid acetyltransferase (444 aa).

The N-acetyltransferase domain maps to 295-434; the sequence is EKVRRANIND…QALYNYQRRS (140 aa).

It belongs to the acetyltransferase family. ArgA subfamily. In terms of assembly, homohexamer.

It is found in the cytoplasm. It carries out the reaction L-glutamate + acetyl-CoA = N-acetyl-L-glutamate + CoA + H(+). The protein operates within amino-acid biosynthesis; L-arginine biosynthesis; N(2)-acetyl-L-ornithine from L-glutamate: step 1/4. This chain is Amino-acid acetyltransferase, found in Proteus mirabilis (strain HI4320).